A 295-amino-acid chain; its full sequence is Taste receptor type 2 member 120 (295 aa).

Residues 1 to 5 (MDLTE) are Extracellular-facing. A helical membrane pass occupies residues 6 to 26 (WIVTIIMMIEFLLGNCANFFI). Topologically, residues 27–45 (MVVNAIDCMKRRKISSADR) are cytoplasmic. The chain crosses the membrane as a helical span at residues 46-66 (IITALAISRIGLLWAMLMNWH). Residues 67–83 (SRVYTTDTYSFQVTAFS) are Extracellular-facing. The chain crosses the membrane as a helical span at residues 84–104 (GIIWAITNHFTTWLGTILSMF). The Cytoplasmic portion of the chain corresponds to 105–125 (YLFKIANFSNCLFLHLKRKLD). Residues 126–146 (SVLLVIFLVSSLLVFAYLGVV) form a helical membrane-spanning segment. Residues 147-177 (NIKKIAWLSVHEGNVTVKSKLMNIASIRDTL) are Extracellular-facing. N-linked (GlcNAc...) asparagine glycosylation occurs at Asn-160. Residues 178–198 (LFSLINIAPFGISLTCVLLLI) traverse the membrane as a helical segment. The Cytoplasmic segment spans residues 199–230 (YSLGKHLKNMKFYGKGCQDQSTMVHIRALQTV). The helical transmembrane segment at 231–251 (VSFLLLYATYSSCVIISGWSI) threads the bilayer. The Extracellular segment spans residues 252–255 (QNVP). The chain crosses the membrane as a helical span at residues 256 to 276 (IFLFCVTIGAFYPAGHSCILI). The Cytoplasmic segment spans residues 277-295 (WGNQKLKQFLLLFLRQMKC).

This sequence belongs to the G-protein coupled receptor T2R family.

The protein localises to the membrane. In terms of biological role, putative taste receptor which may play a role in the perception of bitterness. This chain is Taste receptor type 2 member 120, found in Rattus norvegicus (Rat).